A 712-amino-acid polypeptide reads, in one-letter code: Semaphorin-1A (712 aa).

Positions 1-20 are cleaved as a signal peptide; sequence MVVKILVWSICLIALCHAWM. The 463-residue stretch at 21–483 folds into the Sema domain; sequence PDSSSKLINH…GKDEIRLANL (463 aa). Residues 21 to 601 are Extracellular-facing; it reads PDSSSKLINH…IGGCAVRQQL (581 aa). Asn-42 and Asn-69 each carry an N-linked (GlcNAc...) asparagine glycan. Cystine bridges form between Cys-95–Cys-105 and Cys-123–Cys-132. 2 N-linked (GlcNAc...) asparagine glycosylation sites follow: Asn-161 and Asn-265. 4 disulfide bridges follow: Cys-242-Cys-357, Cys-266-Cys-316, Cys-486-Cys-503, and Cys-495-Cys-512. A helical transmembrane segment spans residues 602 to 622; sequence VIYTAGTLHIVVVVVSIVGLF. Residues 623-712 are Cytoplasmic-facing; the sequence is SWLYSGLSVF…TLQKIKKTYI (90 aa).

This sequence belongs to the semaphorin family.

The protein resides in the membrane. Its function is as follows. Plays a role in growth cones guidance. This chain is Semaphorin-1A (SEMA-1A), found in Tribolium confusum (Confused flour beetle).